Consider the following 265-residue polypeptide: Tryptophan synthase alpha chain (265 aa).

Catalysis depends on proton acceptor residues Glu-48 and Asp-59.

Belongs to the TrpA family. As to quaternary structure, tetramer of two alpha and two beta chains.

It carries out the reaction (1S,2R)-1-C-(indol-3-yl)glycerol 3-phosphate + L-serine = D-glyceraldehyde 3-phosphate + L-tryptophan + H2O. The protein operates within amino-acid biosynthesis; L-tryptophan biosynthesis; L-tryptophan from chorismate: step 5/5. Functionally, the alpha subunit is responsible for the aldol cleavage of indoleglycerol phosphate to indole and glyceraldehyde 3-phosphate. The chain is Tryptophan synthase alpha chain from Vesicomyosocius okutanii subsp. Calyptogena okutanii (strain HA).